Consider the following 523-residue polypeptide: Calcium uptake protein 3, mitochondrial (523 aa).

The transit peptide at 1–6 (MAALRR) directs the protein to the mitochondrion. The EF-hand 1 domain maps to 226–261 (PHAGFRIAFNMFDTDGNEMVDKKEFLVLQEIFRKKN). Asp238, Asp240, Asn242, Met244, Asp246, and Glu249 together coordinate Ca(2+). Residues 395 to 430 (ENTSVFLENVRYSISEEKGITFDEFRSFFQFLNNLE) enclose the EF-hand 2; degenerate domain. Residues 464-499 (SPHLVNTVFKIFDVDKDDQLSYKEFIGIMKDRLHRG) form the EF-hand 3 domain. Ca(2+)-binding residues include Asp476, Asp478, Asp480, Gln482, and Glu487.

Belongs to the MICU1 family. MICU3 subfamily. As to quaternary structure, heterodimer; disulfide-linked; heterodimerizes with MICU1. Heterodimerizes with isoform 3 of MICU1 (MICU1.1) in skeletal muscle. Component of the uniplex complex, composed of MCU, EMRE/SMDT1, MICU1 and MICU3 in a 4:4:1:1 stoichiometry. As to expression, predominantly expressed in skeletal muscle and central nervous system.

It is found in the mitochondrion intermembrane space. The protein localises to the mitochondrion inner membrane. Its function is as follows. Tissue-specific calcium sensor of the mitochondrial calcium uniporter (MCU) channel, which specifically regulates MCU channel activity in the central nervous system and skeletal muscle. Senses calcium level via its EF-hand domains: compared to MICU1 and MICU2, MICU3 has a higher affinity for calcium. MICU1 and MICU3 form a disulfide-linked heterodimer that stimulates and inhibits MCU activity, depending on the concentration of calcium. At low calcium levels, MICU1 occludes the pore of the MCU channel, preventing mitochondrial calcium uptake. At higher calcium levels, calcium-binding to MICU1 and MICU3 induces a conformational change that weakens MCU-MICU1 interactions and moves the MICU1-MICU3 heterodimer away from the pore, allowing calcium permeation through the MCU channel. The high calcium affinity of MICU3 lowers the calcium threshold necessary for calcium permeation through the MCU channel. The MICU1-MICU3 heterodimer promotes flexibility of neurotransmission in neuronal cells by enhancing mitochondrial calcium uptake in presynapses. It is also required to increase mitochondrial calcium uptake in skeletal muscle cells, thereby increasing ATP production. This chain is Calcium uptake protein 3, mitochondrial, found in Mus musculus (Mouse).